We begin with the raw amino-acid sequence, 85 residues long: Small ribosomal subunit protein bS16 (85 aa).

It belongs to the bacterial ribosomal protein bS16 family.

This Nitrosomonas eutropha (strain DSM 101675 / C91 / Nm57) protein is Small ribosomal subunit protein bS16.